A 400-amino-acid polypeptide reads, in one-letter code: Exodeoxyribonuclease 7 large subunit (400 aa).

The protein belongs to the XseA family. Heterooligomer composed of large and small subunits.

The protein localises to the cytoplasm. The enzyme catalyses Exonucleolytic cleavage in either 5'- to 3'- or 3'- to 5'-direction to yield nucleoside 5'-phosphates.. In terms of biological role, bidirectionally degrades single-stranded DNA into large acid-insoluble oligonucleotides, which are then degraded further into small acid-soluble oligonucleotides. This is Exodeoxyribonuclease 7 large subunit from Clostridium kluyveri (strain NBRC 12016).